A 397-amino-acid polypeptide reads, in one-letter code: Cytochrome b (397 aa).

Transmembrane regions (helical) follow at residues 38 to 58 (FGSL…FLAM), 82 to 104 (WLLR…LHIF), 119 to 139 (VWCL…IGYV), and 185 to 205 (FFSL…LHLA). Heme b contacts are provided by histidine 88 and histidine 102. The heme b site is built by histidine 189 and histidine 203. Histidine 208 serves as a coordination point for a ubiquinone. 4 helical membrane-spanning segments follow: residues 231–251 (FYVK…IWIF), 295–315 (AGGV…PFFK), 327–347 (IYQG…WIGC), and 354–373 (FVTI…AITP).

The protein belongs to the cytochrome b family. The main subunits of complex b-c1 are: cytochrome b, cytochrome c1 and the Rieske protein. Heme b is required as a cofactor.

It localises to the mitochondrion inner membrane. Functionally, component of the ubiquinol-cytochrome c reductase complex (complex III or cytochrome b-c1 complex) that is part of the mitochondrial respiratory chain. The b-c1 complex mediates electron transfer from ubiquinol to cytochrome c. Contributes to the generation of a proton gradient across the mitochondrial membrane that is then used for ATP synthesis. This chain is Cytochrome b (MT-CYB), found in Oryza sativa subsp. indica (Rice).